Reading from the N-terminus, the 342-residue chain is A-type ATP synthase subunit C (342 aa).

It belongs to the V-ATPase V0D/AC39 subunit family. As to quaternary structure, has multiple subunits with at least A(3), B(3), C, D, E, F, H, I and proteolipid K(x).

The protein localises to the cell membrane. Its function is as follows. Component of the A-type ATP synthase that produces ATP from ADP in the presence of a proton gradient across the membrane. The polypeptide is A-type ATP synthase subunit C (Archaeoglobus fulgidus (strain ATCC 49558 / DSM 4304 / JCM 9628 / NBRC 100126 / VC-16)).